Consider the following 222-residue polypeptide: GEM-like protein 4 (222 aa).

The region spanning 95 to 173 is the GRAM domain; the sequence is KIFKRLFRVS…CKIDRVNQSQ (79 aa).

The protein belongs to the GEM family.

The polypeptide is GEM-like protein 4 (Arabidopsis thaliana (Mouse-ear cress)).